The sequence spans 260 residues: Pyridoxine 5'-phosphate synthase (260 aa).

The 3-amino-2-oxopropyl phosphate site is built by Asn-10 and Arg-21. Catalysis depends on His-46, which acts as the Proton acceptor. 2 residues coordinate 1-deoxy-D-xylulose 5-phosphate: Arg-48 and His-53. The active-site Proton acceptor is the Glu-76. Thr-113 provides a ligand contact to 1-deoxy-D-xylulose 5-phosphate. Residue His-204 is the Proton donor of the active site. 3-amino-2-oxopropyl phosphate is bound by residues Asp-205 and Gly-227–His-228.

This sequence belongs to the PNP synthase family. Homooctamer; tetramer of dimers.

It localises to the cytoplasm. It carries out the reaction 3-amino-2-oxopropyl phosphate + 1-deoxy-D-xylulose 5-phosphate = pyridoxine 5'-phosphate + phosphate + 2 H2O + H(+). The protein operates within cofactor biosynthesis; pyridoxine 5'-phosphate biosynthesis; pyridoxine 5'-phosphate from D-erythrose 4-phosphate: step 5/5. Functionally, catalyzes the complicated ring closure reaction between the two acyclic compounds 1-deoxy-D-xylulose-5-phosphate (DXP) and 3-amino-2-oxopropyl phosphate (1-amino-acetone-3-phosphate or AAP) to form pyridoxine 5'-phosphate (PNP) and inorganic phosphate. The polypeptide is Pyridoxine 5'-phosphate synthase (Xylella fastidiosa (strain M23)).